A 160-amino-acid polypeptide reads, in one-letter code: Transcription elongation factor GreA (160 aa).

Positions 10–37 (TLEGKAKLENELQELKTVKRKEVVERIK) form a coiled coil.

This sequence belongs to the GreA/GreB family.

In terms of biological role, necessary for efficient RNA polymerase transcription elongation past template-encoded arresting sites. The arresting sites in DNA have the property of trapping a certain fraction of elongating RNA polymerases that pass through, resulting in locked ternary complexes. Cleavage of the nascent transcript by cleavage factors such as GreA or GreB allows the resumption of elongation from the new 3'terminus. GreA releases sequences of 2 to 3 nucleotides. This Listeria welshimeri serovar 6b (strain ATCC 35897 / DSM 20650 / CCUG 15529 / CIP 8149 / NCTC 11857 / SLCC 5334 / V8) protein is Transcription elongation factor GreA.